The sequence spans 496 residues: Aspartyl/glutamyl-tRNA(Asn/Gln) amidotransferase subunit B (496 aa).

Belongs to the GatB/GatE family. GatB subfamily. In terms of assembly, heterotrimer of A, B and C subunits.

The catalysed reaction is L-glutamyl-tRNA(Gln) + L-glutamine + ATP + H2O = L-glutaminyl-tRNA(Gln) + L-glutamate + ADP + phosphate + H(+). It carries out the reaction L-aspartyl-tRNA(Asn) + L-glutamine + ATP + H2O = L-asparaginyl-tRNA(Asn) + L-glutamate + ADP + phosphate + 2 H(+). Functionally, allows the formation of correctly charged Asn-tRNA(Asn) or Gln-tRNA(Gln) through the transamidation of misacylated Asp-tRNA(Asn) or Glu-tRNA(Gln) in organisms which lack either or both of asparaginyl-tRNA or glutaminyl-tRNA synthetases. The reaction takes place in the presence of glutamine and ATP through an activated phospho-Asp-tRNA(Asn) or phospho-Glu-tRNA(Gln). The polypeptide is Aspartyl/glutamyl-tRNA(Asn/Gln) amidotransferase subunit B (Natronomonas pharaonis (strain ATCC 35678 / DSM 2160 / CIP 103997 / JCM 8858 / NBRC 14720 / NCIMB 2260 / Gabara) (Halobacterium pharaonis)).